We begin with the raw amino-acid sequence, 171 residues long: 6,7-dimethyl-8-ribityllumazine synthase (171 aa).

Residues Phe24, 58–60 (ALE), and 82–84 (AVI) contribute to the 5-amino-6-(D-ribitylamino)uracil site. 87–88 (ET) serves as a coordination point for (2S)-2-hydroxy-3-oxobutyl phosphate. The Proton donor role is filled by His90. Residue Asn115 participates in 5-amino-6-(D-ribitylamino)uracil binding. Arg129 lines the (2S)-2-hydroxy-3-oxobutyl phosphate pocket. Positions 150–171 (ALDQLGDDEDEEEDEDDEEERA) are disordered. Over residues 154–171 (LGDDEDEEEDEDDEEERA) the composition is skewed to acidic residues.

It belongs to the DMRL synthase family.

It carries out the reaction (2S)-2-hydroxy-3-oxobutyl phosphate + 5-amino-6-(D-ribitylamino)uracil = 6,7-dimethyl-8-(1-D-ribityl)lumazine + phosphate + 2 H2O + H(+). It functions in the pathway cofactor biosynthesis; riboflavin biosynthesis; riboflavin from 2-hydroxy-3-oxobutyl phosphate and 5-amino-6-(D-ribitylamino)uracil: step 1/2. Functionally, catalyzes the formation of 6,7-dimethyl-8-ribityllumazine by condensation of 5-amino-6-(D-ribitylamino)uracil with 3,4-dihydroxy-2-butanone 4-phosphate. This is the penultimate step in the biosynthesis of riboflavin. In Burkholderia cenocepacia (strain HI2424), this protein is 6,7-dimethyl-8-ribityllumazine synthase.